The chain runs to 1828 residues: Protein TIC 214 (1828 aa).

Helical transmembrane passes span 18–38, 64–84, 87–107, 124–144, 172–192, and 222–242; these read IINS…FSIG, FITG…HLAM, PYTI…WKNH, FSIQ…HFVL, VGWL…LFWI, and VNIF…SPIL. Positions 270–279 are enriched in basic and acidic residues; sequence SEAKETKQEQ. 4 disordered regions span residues 270–301, 618–637, 741–763, and 1533–1571; these read SEAK…PNKL, DLQQ…HAIR, EFKT…EDKK, and KEEF…RQSK. The segment covering 1550 to 1562 has biased composition (basic and acidic residues); that stretch reads KDVEKDYAKSDIK.

The protein belongs to the TIC214 family. As to quaternary structure, part of the Tic complex.

It localises to the plastid. The protein localises to the chloroplast inner membrane. In terms of biological role, involved in protein precursor import into chloroplasts. May be part of an intermediate translocation complex acting as a protein-conducting channel at the inner envelope. The protein is Protein TIC 214 of Calycanthus floridus var. glaucus (Eastern sweetshrub).